The chain runs to 630 residues: Coiled-coil domain-containing protein 120 (630 aa).

Residues 31–70 (RLRGLLDRQRTLQEALSLKLQELRKVCLQEAELTGQLPPE) are involved in CYTH2-binding. A coiled-coil region spans residues 109–173 (ELALEALERE…LRDVRARLGL (65 aa)). Low complexity-rich tracts occupy residues 212–222 (HSESSSLSESG) and 282–297 (ASPT…SASS). Disordered stretches follow at residues 212–435 (HSES…GAPR) and 457–534 (GGGT…NPLL). The span at 326 to 335 (RQWSGSQDSQ) shows a compositional bias: polar residues. Phosphoserine is present on residues Ser358 and Ser360. The segment covering 421–434 (ARPSSAAPASRGAP) has biased composition (low complexity). Omega-N-methylarginine is present on Arg435.

As to quaternary structure, interacts with NIN and CEP170; leading to recruit them to centrosomes. Directly interacts with CYTH2; this interaction stabilizes CCDC120, possibly by preventing ubiquitination. Post-translationally, ubiquitinated; interaction with CYTH2 may prevent ubiquitination.

The protein localises to the cytoplasm. Its subcellular location is the cytoskeleton. It localises to the microtubule organizing center. The protein resides in the centrosome. It is found in the centriole. The protein localises to the cell projection. Its subcellular location is the neuron projection. It localises to the growth cone. The protein resides in the endosome. Functionally, centriolar protein required for centriole subdistal appendage assembly and microtubule anchoring in interphase cells. Together with CCDC68, cooperate with subdistal appendage components ODF2, NIN and CEP170 for hierarchical subdistal appendage assembly. Recruits NIN and CEP170 to centrosomes. Also required for neurite growth. Localizes CYTH2 to vesicles to allow its transport along neurites, and subsequent ARF6 activation and neurite growth. The chain is Coiled-coil domain-containing protein 120 (CCDC120) from Homo sapiens (Human).